The chain runs to 67 residues: Large ribosomal subunit protein uL29 (67 aa).

Belongs to the universal ribosomal protein uL29 family.

The sequence is that of Large ribosomal subunit protein uL29 from Ehrlichia canis (strain Jake).